Reading from the N-terminus, the 427-residue chain is Glutamyl-tRNA(Gln) amidotransferase subunit D (427 aa).

The Asparaginase/glutaminase domain maps to 74-407 (ERVYIIGAGG…EVVRKMFQRN (334 aa)). Active-site residues include Thr84, Thr160, Asp161, and Lys240.

It belongs to the asparaginase 1 family. GatD subfamily. In terms of assembly, heterodimer of GatD and GatE.

The enzyme catalyses L-glutamyl-tRNA(Gln) + L-glutamine + ATP + H2O = L-glutaminyl-tRNA(Gln) + L-glutamate + ADP + phosphate + H(+). Its function is as follows. Allows the formation of correctly charged Gln-tRNA(Gln) through the transamidation of misacylated Glu-tRNA(Gln) in organisms which lack glutaminyl-tRNA synthetase. The reaction takes place in the presence of glutamine and ATP through an activated gamma-phospho-Glu-tRNA(Gln). The GatDE system is specific for glutamate and does not act on aspartate. The chain is Glutamyl-tRNA(Gln) amidotransferase subunit D from Aeropyrum pernix (strain ATCC 700893 / DSM 11879 / JCM 9820 / NBRC 100138 / K1).